A 321-amino-acid chain; its full sequence is uncharacterized protein (321 aa).

Residue Val-2 is modified to N-acetylvaline. The tract at residues 37-63 (SEASRLLTPQTSSNHALSKMQKDDDIR) is disordered. Residues 43–52 (LTPQTSSNHA) show a composition bias toward polar residues. At Thr-44 the chain carries Phosphothreonine. Phosphoserine is present on residues Ser-49, Ser-69, Ser-121, Ser-126, Ser-129, Ser-137, and Ser-139. Disordered regions lie at residues 115 to 270 (KKQR…YSIS) and 283 to 321 (ETLE…AQPQ). 3 stretches are compositionally biased toward polar residues: residues 120–145 (KSIN…TSTD), 153–162 (KYSSSGTPEN), and 178–189 (SYGQMIKNNSNR). Thr-159 is subject to Phosphothreonine. Basic and acidic residues predominate over residues 204–229 (EIDHTAPEKSEKRQERSGRSFDRQKS). The span at 237-253 (LSRSISRGPTKNKTVSP) shows a compositional bias: polar residues. Phosphoserine occurs at positions 238, 240, 242, and 270. Acidic residues predominate over residues 284 to 305 (TLEEEQEDAEKEGVLMEDEGNE). Over residues 306–315 (EYTKDLEEAA) the composition is skewed to basic and acidic residues.

The protein localises to the cytoplasm. This is an uncharacterized protein from Saccharomyces cerevisiae (strain ATCC 204508 / S288c) (Baker's yeast).